A 447-amino-acid chain; its full sequence is Mannose/glucose-specific lectin (447 aa).

Jacalin-type lectin domains follow at residues 5–148, 153–294, and 300–443; these read MISV…FVKP, TISF…YVKP, and SISI…FVKP.

Belongs to the jacalin lectin family. As to expression, expressed in seeds (at protein level).

Its activity is regulated as follows. Hemagglutinating activity is slightly inhibited by alpha-methyl-D-mannopyranoside. In terms of biological role, D-mannose/D-glucose-binding lectin that also binds derivatives N-acetyl-D-glucosamine and alpha-methyl-D-mannopyranoside. Does not bind D-galactose, L-Rhamnose, D-fructose, lactose or glycoproteins fetiun and mucin. Shows agglutinating activity towards human and rabbit erythrocytes. Also displays antimicrobial activity against L.infantum. This is Mannose/glucose-specific lectin from Parkia pendula (Inga pendula).